Here is a 309-residue protein sequence, read N- to C-terminus: uncharacterized protein (309 aa).

2 disordered regions span residues 1–94 (IGEV…RQQI) and 286–309 (HTRN…PPRG). Residues 30 to 43 (PAQPPSPAPTPSRT) are compositionally biased toward pro residues. The segment covering 58 to 67 (RSKTPDKRSA) has biased composition (basic and acidic residues). Pro residues predominate over residues 297–309 (KNTPPPLEDPPRG).

This is an uncharacterized protein from Homo sapiens (Human).